Reading from the N-terminus, the 79-residue chain is Ixosin (79 aa).

Residues 1–56 (MSAHKVQIGLSSGQFRVALQVPSVRLKGLGSFHTGSIVLPSQGSLREDQISLHNQD) constitute a propeptide, removed in mature form.

Has antifungal activity against C.albicans. Has antibacterial activity against the Gram-positive bacterium S.aureus and the Gram-negative bacterium E.coli. Lacks hemolytic activity against rabbit erythrocytes. The polypeptide is Ixosin (Ixodes sinensis (Hard tick)).